The primary structure comprises 206 residues: Small ribosomal subunit protein uS4 (206 aa).

The S4 RNA-binding domain maps to 96 to 156; sequence TRLDNVVYRM…EKSRTQARIK (61 aa).

This sequence belongs to the universal ribosomal protein uS4 family. Part of the 30S ribosomal subunit. Contacts protein S5. The interaction surface between S4 and S5 is involved in control of translational fidelity.

Its function is as follows. One of the primary rRNA binding proteins, it binds directly to 16S rRNA where it nucleates assembly of the body of the 30S subunit. Functionally, with S5 and S12 plays an important role in translational accuracy. The protein is Small ribosomal subunit protein uS4 of Shewanella sp. (strain ANA-3).